We begin with the raw amino-acid sequence, 610 residues long: UvrABC system protein C (610 aa).

Residues serine 16 to valine 94 enclose the GIY-YIG domain. A UVR domain is found at aspartate 204–valine 239.

The protein belongs to the UvrC family. In terms of assembly, interacts with UvrB in an incision complex.

It localises to the cytoplasm. In terms of biological role, the UvrABC repair system catalyzes the recognition and processing of DNA lesions. UvrC both incises the 5' and 3' sides of the lesion. The N-terminal half is responsible for the 3' incision and the C-terminal half is responsible for the 5' incision. In Salmonella schwarzengrund (strain CVM19633), this protein is UvrABC system protein C.